We begin with the raw amino-acid sequence, 188 residues long: Pyridoxal 5'-phosphate synthase subunit PdxT (188 aa).

47-49 contributes to the L-glutamine binding site; the sequence is GES. Catalysis depends on Cys79, which acts as the Nucleophile. Residues Arg105 and 134-135 each bind L-glutamine; that span reads IR. Catalysis depends on charge relay system residues His170 and Glu172.

It belongs to the glutaminase PdxT/SNO family. In the presence of PdxS, forms a dodecamer of heterodimers. Only shows activity in the heterodimer.

The catalysed reaction is aldehydo-D-ribose 5-phosphate + D-glyceraldehyde 3-phosphate + L-glutamine = pyridoxal 5'-phosphate + L-glutamate + phosphate + 3 H2O + H(+). It carries out the reaction L-glutamine + H2O = L-glutamate + NH4(+). It functions in the pathway cofactor biosynthesis; pyridoxal 5'-phosphate biosynthesis. In terms of biological role, catalyzes the hydrolysis of glutamine to glutamate and ammonia as part of the biosynthesis of pyridoxal 5'-phosphate. The resulting ammonia molecule is channeled to the active site of PdxS. This is Pyridoxal 5'-phosphate synthase subunit PdxT from Listeria monocytogenes serovar 1/2a (strain ATCC BAA-679 / EGD-e).